Reading from the N-terminus, the 490-residue chain is Betaine aldehyde dehydrogenase (490 aa).

K(+) contacts are provided by T26, I27, and D93. Residue 150–152 (GAW) coordinates NAD(+). K162 serves as the catalytic Charge relay system. Position 176 to 179 (176 to 179 (KPSE)) interacts with NAD(+). V180 contacts K(+). Residue 230–233 (GVAS) coordinates NAD(+). Residue L246 participates in K(+) binding. E252 acts as the Proton acceptor in catalysis. NAD(+)-binding residues include G254, C286, and E387. The active-site Nucleophile is C286. At C286 the chain carries Cysteine sulfenic acid (-SOH). Residues K457 and G460 each coordinate K(+). The active-site Charge relay system is the E464.

This sequence belongs to the aldehyde dehydrogenase family. As to quaternary structure, dimer of dimers. It depends on K(+) as a cofactor.

The catalysed reaction is betaine aldehyde + NAD(+) + H2O = glycine betaine + NADH + 2 H(+). It functions in the pathway amine and polyamine biosynthesis; betaine biosynthesis via choline pathway; betaine from betaine aldehyde: step 1/1. Involved in the biosynthesis of the osmoprotectant glycine betaine. Catalyzes the irreversible oxidation of betaine aldehyde to the corresponding acid. This Escherichia coli (strain SE11) protein is Betaine aldehyde dehydrogenase.